The primary structure comprises 619 residues: ATP-dependent RNA helicase abstrakt (619 aa).

A compositionally biased stretch (basic residues) spans 1–11; sequence MAHVKRYRRSS. 2 disordered regions span residues 1–25 and 50–69; these read MAHV…EDYV and ETAQ…SQGA. A phosphoserine mark is found at serine 11, serine 13, serine 14, serine 56, serine 57, serine 58, and serine 66. Positions 177–205 match the Q motif motif; it reads RSFREMKFPKGILNGLAAKGIKNPTPIQV. The region spanning 208–392 is the Helicase ATP-binding domain; that stretch reads LPTVLAGRDL…RSALVKPVTI (185 aa). Position 221 to 228 (221 to 228) interacts with ATP; sequence AFTGSGKT. A DEAD box motif is present at residues 340-343; it reads DEAD. The Helicase C-terminal domain maps to 403–563; that stretch reads NVTQQVEYVK…EVPDFLDELA (161 aa). A CCHC-type zinc finger spans residues 577–594; that stretch reads HGCTYCGGLGHRITECPK.

It belongs to the DEAD box helicase family. DDX41 subfamily.

The protein localises to the nucleus. The enzyme catalyses ATP + H2O = ADP + phosphate + H(+). Functionally, ATP-dependent RNA helicase. Is essential for the directed and fasciculated early outgrowth of the bolwig nerves, as well as for its navigation at later stages. Is required during post-transcriptional gene expression. Plays a role during morphogenetic process, apoptosis and the establishment of cell polarity. This chain is ATP-dependent RNA helicase abstrakt (abs), found in Drosophila melanogaster (Fruit fly).